Here is a 1033-residue protein sequence, read N- to C-terminus: Integrin alpha-IIb (1033 aa).

Residues 1–31 (MARASCAWHSLWLLQWTPLFLGPSAVPPVWA) form the signal peptide. Topologically, residues 32 to 988 (LNLDSEKFSV…TQLLRALEER (957 aa)) are extracellular. FG-GAP repeat units follow at residues 35-96 (DSEK…GGKC), 109-173 (NLGF…GRAE), 184-237 (SVYA…ISSY), 252-304 (TYDN…DSYY), 305-370 (QPLH…PQAL), 372-431 (TPTL…GLSP), and 434-495 (SQVL…VQDS). Residues asparagine 46 and asparagine 75 are each glycosylated (N-linked (GlcNAc...) asparagine). Disulfide bonds link cysteine 87/cysteine 96, cysteine 138/cysteine 161, and cysteine 177/cysteine 197. Positions 273, 275, 277, 280, 282, 327, 329, 331, 333, 335, 395, 399, 401, 403, 456, 458, 460, 462, and 464 each coordinate Ca(2+). 2 cysteine pairs are disulfide-bonded: cysteine 503–cysteine 514 and cysteine 520–cysteine 575. The N-linked (GlcNAc...) asparagine glycan is linked to asparagine 600. Intrachain disulfides connect cysteine 632–cysteine 638, cysteine 704–cysteine 717, cysteine 856–cysteine 916, and cysteine 905–cysteine 911. A glycan (N-linked (GlcNAc...) asparagine) is linked at asparagine 710. Asparagine 957 is a glycosylation site (N-linked (GlcNAc...) asparagine). The chain crosses the membrane as a helical span at residues 989–1014 (AIPVWWVLVGVLGGLLLLTLLVLAMW). Residues 1015 to 1033 (KAGFFKRNRPPLEEDEEEE) are Cytoplasmic-facing. Positions 1017-1021 (GFFKR) match the GFFKR motif motif.

This sequence belongs to the integrin alpha chain family. In terms of assembly, heterodimer of an alpha and a beta subunit. The alpha subunit is composed of a heavy and a light chain linked by a disulfide bond. Alpha-IIb associates with beta-3. Directly interacts with RNF181. Interacts (via C-terminus cytoplasmic tail region) with CIB1; the interaction is direct and calcium-dependent. Interacts (via C-terminus cytoplasmic tail region) with CIB2, CIB3 and CIB4; the interactions are stabilized/increased in a calcium and magnesium-dependent manner. ITGA2B:ITGB3 interacts with PPIA/CYPA; the interaction is ROS and PPIase activity-dependent and is increased in the presence of thrombin. ITGA2B:ITGB3 interacts with SELP (via C-type lectin domain); the interaction mediates cell-cell interaction and adhesion. Post-translationally, cleaved by ELANE; the cleavage promotes activation of platelet fibrinogen receptor integrin alpha-IIb/beta-3.

Its subcellular location is the membrane. Its function is as follows. Integrin alpha-IIb/beta-3 is a receptor for fibronectin, fibrinogen, plasminogen, prothrombin, thrombospondin and vitronectin. It recognizes the sequence R-G-D in a wide array of ligands. It recognizes the sequence H-H-L-G-G-G-A-K-Q-A-G-D-V in fibrinogen gamma chain. Following activation integrin alpha-IIb/beta-3 brings about platelet/platelet interaction through binding of soluble fibrinogen. This step leads to rapid platelet aggregation which physically plugs ruptured endothelial cell surface. This Mus musculus (Mouse) protein is Integrin alpha-IIb (Itga2b).